A 583-amino-acid polypeptide reads, in one-letter code: Laccase-14 (583 aa).

The first 30 residues, 1–30 (MAPSLGSGSTRILLIVSLLLCLRQQAVVDA), serve as a signal peptide directing secretion. Plastocyanin-like domains follow at residues 38-158 (HVGN…PRPG) and 168-320 (AEHT…YDDD). N-linked (GlcNAc...) asparagine glycans are attached at residues Asn41 and Asn84. His88 and His90 together coordinate Cu cation. Asn126 carries an N-linked (GlcNAc...) asparagine glycan. Residues His137 and His139 each coordinate Cu cation. Residues Asn179, Asn251, Asn304, Asn338, Asn388, Asn400, Asn446, and Asn464 are each glycosylated (N-linked (GlcNAc...) asparagine). The region spanning 426–567 (DFPDRPPVMF…AMAFDVQDGP (142 aa)) is the Plastocyanin-like 3 domain. Residues His482, His485, His487, His546, Cys547, His548, and His552 each contribute to the Cu cation site.

It belongs to the multicopper oxidase family. It depends on Cu cation as a cofactor.

Its subcellular location is the secreted. It localises to the extracellular space. The protein resides in the apoplast. It carries out the reaction 4 hydroquinone + O2 = 4 benzosemiquinone + 2 H2O. In terms of biological role, lignin degradation and detoxification of lignin-derived products. The chain is Laccase-14 (LAC14) from Oryza sativa subsp. japonica (Rice).